A 635-amino-acid chain; its full sequence is Early transcription factor 70 kDa subunit (635 aa).

The region spanning Arg32–Glu185 is the Helicase ATP-binding domain. An ATP-binding site is contributed by His45–Thr52. A DEXH box motif is present at residues Asp135–His138. The Helicase C-terminal domain maps to Lys326–Leu505.

Belongs to the helicase family. VETF subfamily. Heterodimer of a 70 kDa and a 82 kDa subunit. Part of the early transcription complex composed of ETF, RAP94, and the DNA-directed RNA polymerase.

Its subcellular location is the virion. Acts with RNA polymerase to initiate transcription from early gene promoters. Is recruited by the RPO-associated protein of 94 kDa (RAP94) to form the early transcription complex, which also contains the core RNA polymerase. ETF heterodimer binds to early gene promoters. The polypeptide is Early transcription factor 70 kDa subunit (VETFS) (Oryctolagus cuniculus (Rabbit)).